The sequence spans 577 residues: Arginine--tRNA ligase (577 aa).

Residues 122–132 (PNVAKEMHVGH) carry the 'HIGH' region motif.

Belongs to the class-I aminoacyl-tRNA synthetase family. Monomer.

The protein localises to the cytoplasm. The catalysed reaction is tRNA(Arg) + L-arginine + ATP = L-arginyl-tRNA(Arg) + AMP + diphosphate. This is Arginine--tRNA ligase from Klebsiella pneumoniae subsp. pneumoniae (strain ATCC 700721 / MGH 78578).